A 201-amino-acid chain; its full sequence is Peptidyl-prolyl cis-trans isomerase FKBP11 (201 aa).

A signal peptide spans 1–27; that stretch reads MTLRPSLLPLHLLLLLLLSAAVCRAEA. One can recognise a PPIase FKBP-type domain in the interval 57 to 144; sequence GDTLHIHYTG…QYDVELIALI (88 aa). Residues 156-176 traverse the membrane as a helical segment; it reads ILPLVGMAMVPALLGLIGYHL.

It belongs to the FKBP-type PPIase family. As to quaternary structure, interacts with IFITM5.

It localises to the membrane. The catalysed reaction is [protein]-peptidylproline (omega=180) = [protein]-peptidylproline (omega=0). PPIases accelerate the folding of proteins during protein synthesis. The protein is Peptidyl-prolyl cis-trans isomerase FKBP11 (FKBP11) of Homo sapiens (Human).